A 409-amino-acid polypeptide reads, in one-letter code: AT-rich interactive domain-containing protein 3C (409 aa).

Positions 1 to 14 (MEALQRQQAARLAQ) are enriched in low complexity. The segment at 1 to 91 (MEALQRQQAA…SPSSQSPGIQ (91 aa)) is disordered. Over residues 19–30 (LAPPRLPLPQPP) the composition is skewed to pro residues. A compositionally biased stretch (acidic residues) spans 49-70 (AEEEEGAEDEEGETPLAEEETA). One can recognise an ARID domain in the interval 110–202 (DPKRKEFLDD…YLYPYECETR (93 aa)). Disordered stretches follow at residues 233 to 274 (NLAG…PAHA), 306 to 333 (TREK…RLGA), and 385 to 409 (PVPA…STLP). A compositionally biased stretch (low complexity) spans 235–257 (AGPTPRGAPGPASSHGPAPTATP). The REKLES domain occupies 301 to 386 (LASEATREKL…GILFARRQPV (86 aa)). A compositionally biased stretch (basic and acidic residues) spans 306–320 (TREKLAPEEPPEKRA). Positions 393 to 402 (TNPPPLPSTG) are enriched in pro residues.

In terms of assembly, interacts (via REKLES DOMAIN) with NPM1; the interaction mediates ARID3C nuclear shuttling.

It localises to the nucleus. In terms of biological role, transcription factor involved in monocyte-to-macrophage differentiation. Forms a complex with NPM1 to translocate to the nucleus, acting as a transcription factor that promotes the expression of the genes involved in macrophage differentiation, such as STAT3, STAT1 and JUNB. The polypeptide is AT-rich interactive domain-containing protein 3C (Arid3c) (Mus musculus (Mouse)).